A 258-amino-acid polypeptide reads, in one-letter code: Transmembrane O-methyltransferase homolog (258 aa).

S-adenosyl-L-methionine contacts are provided by residues glutamate 104, 106-107 (GT), serine 112, glutamate 130, and serine 160.

The protein belongs to the class I-like SAM-binding methyltransferase superfamily. Cation-dependent O-methyltransferase family. As to quaternary structure, interacts with LHFPL5, PCDH15, TMC1, TMC2 and TMIE. Interacts directly with TMC1. The interaction of TOMT with TMC1 and TMC2 is required for the transportation of TMC1/2 into the stereocilia of hair cells.

It localises to the cytoplasm. It is found in the endoplasmic reticulum. The enzyme catalyses a catechol + S-adenosyl-L-methionine = a guaiacol + S-adenosyl-L-homocysteine + H(+). Its function is as follows. Catalyzes the O-methylation, and thereby the inactivation, of catecholamine neurotransmitters and catechol hormones. Required for auditory function. Component of the cochlear hair cell's mechanotransduction (MET) machinery. Involved in the assembly of the asymmetric tip-link MET complex. Required for transportation of TMC1 and TMC2 proteins into the mechanically sensitive stereocilia of the hair cells. The function in MET is independent of the enzymatic activity. This is Transmembrane O-methyltransferase homolog from Rattus norvegicus (Rat).